We begin with the raw amino-acid sequence, 385 residues long: Mannitol-1-phosphate 5-dehydrogenase (385 aa).

Position 3-14 (3-14 (DVHFGAGNIGRG)) interacts with NAD(+).

Belongs to the mannitol dehydrogenase family.

The enzyme catalyses D-mannitol 1-phosphate + NAD(+) = beta-D-fructose 6-phosphate + NADH + H(+). This chain is Mannitol-1-phosphate 5-dehydrogenase, found in Lactiplantibacillus plantarum (strain ATCC BAA-793 / NCIMB 8826 / WCFS1) (Lactobacillus plantarum).